Consider the following 299-residue polypeptide: Acetaldehyde dehydrogenase 6 (299 aa).

Cys125 functions as the Acyl-thioester intermediate in the catalytic mechanism. NAD(+) is bound by residues 156–164 (GAGPGTRAN) and Asn275.

The protein belongs to the acetaldehyde dehydrogenase family.

The catalysed reaction is acetaldehyde + NAD(+) + CoA = acetyl-CoA + NADH + H(+). The chain is Acetaldehyde dehydrogenase 6 (hpdG) from Rhodococcus jostii (strain RHA1).